The sequence spans 341 residues: Ketol-acid reductoisomerase (NADP(+)) (341 aa).

In terms of domain architecture, KARI N-terminal Rossmann spans 1–182; it reads MATIYYDKDA…GCTRAGVLET (182 aa). NADP(+)-binding positions include 25–28, Ser-51, Ser-53, and 83–86; these read YGSQ and DQTQ. Residue His-108 is part of the active site. Gly-134 is an NADP(+) binding site. In terms of domain architecture, KARI C-terminal knotted spans 183–328; that stretch reads TFKEETETDL…KRLRDMMSWI (146 aa). Asp-191, Glu-195, Glu-227, and Glu-231 together coordinate Mg(2+). Ser-252 contacts substrate.

This sequence belongs to the ketol-acid reductoisomerase family. Mg(2+) serves as cofactor.

It catalyses the reaction (2R)-2,3-dihydroxy-3-methylbutanoate + NADP(+) = (2S)-2-acetolactate + NADPH + H(+). The catalysed reaction is (2R,3R)-2,3-dihydroxy-3-methylpentanoate + NADP(+) = (S)-2-ethyl-2-hydroxy-3-oxobutanoate + NADPH + H(+). It functions in the pathway amino-acid biosynthesis; L-isoleucine biosynthesis; L-isoleucine from 2-oxobutanoate: step 2/4. Its pathway is amino-acid biosynthesis; L-valine biosynthesis; L-valine from pyruvate: step 2/4. In terms of biological role, involved in the biosynthesis of branched-chain amino acids (BCAA). Catalyzes an alkyl-migration followed by a ketol-acid reduction of (S)-2-acetolactate (S2AL) to yield (R)-2,3-dihydroxy-isovalerate. In the isomerase reaction, S2AL is rearranged via a Mg-dependent methyl migration to produce 3-hydroxy-3-methyl-2-ketobutyrate (HMKB). In the reductase reaction, this 2-ketoacid undergoes a metal-dependent reduction by NADPH to yield (R)-2,3-dihydroxy-isovalerate. The chain is Ketol-acid reductoisomerase (NADP(+)) from Anaeromyxobacter sp. (strain K).